A 230-amino-acid polypeptide reads, in one-letter code: Small ribosomal subunit protein uS7B (230 aa).

The disordered stretch occupies residues 1 to 22 (MSEEVVESSSQEASQVIPQEQE). Positions 7–16 (ESSSQEASQV) are enriched in low complexity.

It belongs to the universal ribosomal protein uS7 family.

This chain is Small ribosomal subunit protein uS7B (RpS5b), found in Drosophila melanogaster (Fruit fly).